Consider the following 388-residue polypeptide: LL-diaminopimelate aminotransferase (388 aa).

Substrate-binding residues include tyrosine 16 and glycine 41. Pyridoxal 5'-phosphate-binding positions include tyrosine 70, 104–105 (SK), tyrosine 129, asparagine 179, tyrosine 210, and 239–241 (SLS). Residues lysine 105, tyrosine 129, and asparagine 179 each coordinate substrate. Lysine 242 is modified (N6-(pyridoxal phosphate)lysine). Arginine 250 is a binding site for pyridoxal 5'-phosphate. Arginine 368 provides a ligand contact to substrate.

It belongs to the class-I pyridoxal-phosphate-dependent aminotransferase family. LL-diaminopimelate aminotransferase subfamily. Homodimer. Pyridoxal 5'-phosphate serves as cofactor.

The enzyme catalyses (2S,6S)-2,6-diaminopimelate + 2-oxoglutarate = (S)-2,3,4,5-tetrahydrodipicolinate + L-glutamate + H2O + H(+). Its pathway is amino-acid biosynthesis; L-lysine biosynthesis via DAP pathway; LL-2,6-diaminopimelate from (S)-tetrahydrodipicolinate (aminotransferase route): step 1/1. Its function is as follows. Involved in the synthesis of meso-diaminopimelate (m-DAP or DL-DAP), required for both lysine and peptidoglycan biosynthesis. Catalyzes the direct conversion of tetrahydrodipicolinate to LL-diaminopimelate. This is LL-diaminopimelate aminotransferase from Maridesulfovibrio salexigens (strain ATCC 14822 / DSM 2638 / NCIMB 8403 / VKM B-1763) (Desulfovibrio salexigens).